We begin with the raw amino-acid sequence, 222 residues long: Peptide methionine sulfoxide reductase MsrA (222 aa).

Cysteine 60 is a catalytic residue.

This sequence belongs to the MsrA Met sulfoxide reductase family.

It carries out the reaction L-methionyl-[protein] + [thioredoxin]-disulfide + H2O = L-methionyl-(S)-S-oxide-[protein] + [thioredoxin]-dithiol. The catalysed reaction is [thioredoxin]-disulfide + L-methionine + H2O = L-methionine (S)-S-oxide + [thioredoxin]-dithiol. Has an important function as a repair enzyme for proteins that have been inactivated by oxidation. Catalyzes the reversible oxidation-reduction of methionine sulfoxide in proteins to methionine. This Pseudomonas putida (strain W619) protein is Peptide methionine sulfoxide reductase MsrA.